Reading from the N-terminus, the 389-residue chain is Cytochrome b (389 aa).

Transmembrane regions (helical) follow at residues 32 to 52, 76 to 98, 113 to 133, and 179 to 199; these read FGSLLATVLGIQILSGIFLAM, WLIRYMHATGASFFFAFLYLHIA, TWTIGTAIFFLTILTAFLGYT, and FFSLHYLLPFIISALAIMHMI. Residues H82 and H96 each contribute to the heme b site. Heme b is bound by residues H183 and H197. H202 serves as a coordination point for a ubiquinone. The next 4 membrane-spanning stretches (helical) occupy residues 225-245, 289-309, 321-341, and 348-368; these read YLIKDLVTIFLFFIIFSIIIF, LFGVIAMFFAIFILFFLPLLD, IGKLLFWCFISNFILLMFIGA, and YVAIGTYATLFYFAYFVFFIP.

The protein belongs to the cytochrome b family. As to quaternary structure, fungal cytochrome b-c1 complex contains 10 subunits; 3 respiratory subunits, 2 core proteins and 5 low-molecular weight proteins. Cytochrome b-c1 complex is a homodimer. The cofactor is heme b.

The protein localises to the mitochondrion inner membrane. Functionally, component of the ubiquinol-cytochrome c reductase complex (complex III or cytochrome b-c1 complex) that is part of the mitochondrial respiratory chain. The b-c1 complex mediates electron transfer from ubiquinol to cytochrome c. Contributes to the generation of a proton gradient across the mitochondrial membrane that is then used for ATP synthesis. This is Cytochrome b (cob) from Schizosaccharomyces japonicus (Fission yeast).